Reading from the N-terminus, the 310-residue chain is MSAPRILHRVARPVPSSISTITRLNRQFGTTALRLKDGSDEASPEVKAHRANQANKAPNQFVPNTTSTMTKDFVNVGQKPAPPEMLNSANPNYRPSDPYPGRIEHFTGGRQDNGAQKPELGVGEMEGITFKVEPLKRVGEELATKRARLLYQSRKRGILESDLLLSTFADVYLGKMNYDQLVEYDSFLDENDWDIYYWATQDSPEEISPSTPKEDTITETWKESGAKSGEWAQTIGAFRAAYRPVPSRWQNSEVLALLREHVRDKSATGFEKAKNKKTGGGGGLGRMPDVQVFNSGHIVHRRHVLRMLYI.

Positions 35–48 (LKDGSDEASPEVKA) are enriched in basic and acidic residues. The tract at residues 35-67 (LKDGSDEASPEVKAHRANQANKAPNQFVPNTTS) is disordered. Residues 52 to 67 (NQANKAPNQFVPNTTS) are compositionally biased toward polar residues.

Belongs to the SDHAF2 family. In terms of assembly, interacts with the flavoprotein subunit within the SDH catalytic dimer.

It is found in the mitochondrion matrix. Functionally, plays an essential role in the assembly of succinate dehydrogenase (SDH), an enzyme complex (also referred to as respiratory complex II) that is a component of both the tricarboxylic acid (TCA) cycle and the mitochondrial electron transport chain, and which couples the oxidation of succinate to fumarate with the reduction of ubiquinone (coenzyme Q) to ubiquinol. Required for flavinylation (covalent attachment of FAD) of the flavoprotein subunit of the SDH catalytic dimer. The sequence is that of Succinate dehydrogenase assembly factor 2, mitochondrial from Penicillium rubens (strain ATCC 28089 / DSM 1075 / NRRL 1951 / Wisconsin 54-1255) (Penicillium chrysogenum).